The primary structure comprises 501 residues: Glycerol kinase (501 aa).

Residue T17 coordinates ADP. Residues T17, T18, and S19 each contribute to the ATP site. T17 serves as a coordination point for sn-glycerol 3-phosphate. Position 21 (R21) interacts with ADP. Residues R87, E88, Y139, and D243 each coordinate sn-glycerol 3-phosphate. Glycerol is bound by residues R87, E88, Y139, D243, and Q244. T265 and G308 together coordinate ADP. Residues T265, G308, Q312, and G409 each contribute to the ATP site. ADP is bound by residues G409 and N413.

This sequence belongs to the FGGY kinase family.

The enzyme catalyses glycerol + ATP = sn-glycerol 3-phosphate + ADP + H(+). The protein operates within polyol metabolism; glycerol degradation via glycerol kinase pathway; sn-glycerol 3-phosphate from glycerol: step 1/1. With respect to regulation, inhibited by fructose 1,6-bisphosphate (FBP). Its function is as follows. Key enzyme in the regulation of glycerol uptake and metabolism. Catalyzes the phosphorylation of glycerol to yield sn-glycerol 3-phosphate. The polypeptide is Glycerol kinase (Pseudomonas syringae pv. tomato (strain ATCC BAA-871 / DC3000)).